The primary structure comprises 84 residues: Beta-defensin 119 (84 aa).

The first 21 residues, 1-21, serve as a signal peptide directing secretion; sequence MKLLYLFLAILLAIEEPVISG. 3 disulfide bridges follow: C28–C55, C35–C49, and C39–C56.

The protein belongs to the beta-defensin family.

It localises to the secreted. In terms of biological role, has antibacterial activity. The polypeptide is Beta-defensin 119 (DEFB119) (Hylobates lar (Lar gibbon)).